A 166-amino-acid chain; its full sequence is MPPKFDPSQVVDVYVRVTGGEVGAASSLAPKIGPLGLSPKKIGEDIAKETANDWKGLRVTVKLTVQNRQAKVSVVPSAAALVIKALKEPERDRKKTKNIKHSGHISLDDVIEIAKIMKHRSMAKELAGTVKEILRTCVSVGCTVDGKDPKDLQQEIADGDVEIPLD.

Belongs to the universal ribosomal protein uL11 family.

In terms of biological role, this protein binds directly to 26S ribosomal RNA. The sequence is that of Large ribosomal subunit protein uL11 (RPL12) from Prunus armeniaca (Apricot).